Here is a 692-residue protein sequence, read N- to C-terminus: Elongation factor G (692 aa).

In terms of domain architecture, tr-type G spans 8-282 (ENTRNIGIMA…AVIDYLPSPL (275 aa)). Residues 17–24 (AHIDAGKT), 81–85 (DTPGH), and 135–138 (NKMD) each bind GTP.

It belongs to the TRAFAC class translation factor GTPase superfamily. Classic translation factor GTPase family. EF-G/EF-2 subfamily.

It localises to the cytoplasm. Its function is as follows. Catalyzes the GTP-dependent ribosomal translocation step during translation elongation. During this step, the ribosome changes from the pre-translocational (PRE) to the post-translocational (POST) state as the newly formed A-site-bound peptidyl-tRNA and P-site-bound deacylated tRNA move to the P and E sites, respectively. Catalyzes the coordinated movement of the two tRNA molecules, the mRNA and conformational changes in the ribosome. This is Elongation factor G from Bacillus cereus (strain ZK / E33L).